The sequence spans 331 residues: MLFRFGVVVPPAVAGTRLELLLAGSRPELGRWEPRGAVRLRPAGTAAGAAALALQEPGLWLAEVELAPEEEAADGAEPGRIDTFWYKFLQREPGGELHWEGNGPHHDRCCTYNENNLVDGVYCLPVGHWIEATGHTNEMKHTTDFYFNIAGHQAMHYSRILPNIWLGSCPRQLEHVTIKLKHELGITAVMNFQTEWDIIQNSSGCNRYPEPMTPDTMMKLYKEEGLAYIWMPTPDMSTEGRVQMLPQAVCLLHALLENGHTVYVHCNAGVGRSTAAVCGWLHYVIGWSLRKVQYFIMAKRPAVYIDEEALAQAQQDFFQKFGKVHSSICTL.

The 124-residue stretch at 1–124 (MLFRFGVVVP…NNLVDGVYCL (124 aa)) folds into the CBM20 domain. At Ser-25 the chain carries Phosphoserine; by AMPK. Substrate-binding positions include Trp-32, Lys-87, 103–107 (GPHHD), Asp-197, Asp-235, and Arg-241. In terms of domain architecture, Tyrosine-protein phosphatase spans 156 to 323 (HYSRILPNIW…QQDFFQKFGK (168 aa)). Cys-266 functions as the Phosphocysteine intermediate in the catalytic mechanism. Residues 266–272 (CNAGVGR) carry the Glucan phosphatase signature motif CXAGXGR motif. Substrate is bound by residues 267–272 (NAGVGR) and Tyr-304.

Belongs to the protein-tyrosine phosphatase family. In terms of assembly, homodimer. Interacts with itself. Interacts with PPP1R3B, PPP1R3C, PPP1R3D, HIRIP5, and EPM2AIP1. Binds glycogen and Lafora bodies. Interacts with NHLRC1/malin (via the NHL repeats). Forms a complex with NHLRC1/malin and HSP70. Interacts with PPP1R3D; in the presence of NHLC1/malin the interaction leads to ubiquitination and autophagic degradation of PPP1R3D. Interacts (via the phosphatase domain) with MAPT/Tau; the interaction dephosphorylates MAPT. Interacts with PRDM8. Post-translationally, polyubiquitinated by NHLRC1/malin. In terms of processing, phosphorylation on Ser-25 by AMPK affects the phosphatase activity of the enzyme and its ability to homodimerize and interact with NHLRC1, PPP1R3C or PRKAA2. In terms of tissue distribution, widely expressed.

The protein localises to the cytoplasm. Its subcellular location is the endoplasmic reticulum membrane. It localises to the cell membrane. The catalysed reaction is O-phospho-L-tyrosyl-[protein] + H2O = L-tyrosyl-[protein] + phosphate. The enzyme catalyses O-phospho-L-seryl-[protein] + H2O = L-seryl-[protein] + phosphate. It catalyses the reaction O-phospho-L-threonyl-[protein] + H2O = L-threonyl-[protein] + phosphate. Its function is as follows. Plays an important role in preventing glycogen hyperphosphorylation and the formation of insoluble aggregates, via its activity as glycogen phosphatase, and by promoting the ubiquitination of proteins involved in glycogen metabolism via its interaction with the E3 ubiquitin ligase NHLRC1/malin. Dephosphorylates phosphotyrosine and synthetic substrates, such as para-nitrophenylphosphate (pNPP), and has low activity with phosphoserine and phosphothreonine substrates (in vitro). Has also been shown to dephosphorylate MAPT. Shows strong phosphatase activity towards complex carbohydrates in vitro, avoiding glycogen hyperphosphorylation which is associated with reduced branching and formation of insoluble aggregates. Forms a complex with NHLRC1/malin and HSP70, which suppresses the cellular toxicity of misfolded proteins by promoting their degradation through the ubiquitin-proteasome system (UPS). Acts as a scaffold protein to facilitate PPP1R3C/PTG ubiquitination by NHLRC1/malin. Also promotes proteasome-independent protein degradation through the macroautophagy pathway. In Rattus norvegicus (Rat), this protein is Laforin (Epm2a).